The sequence spans 361 residues: Pyruvate dehydrogenase E1 component subunit beta, mitochondrial (361 aa).

Residues Met-1–Leu-27 constitute a mitochondrion transit peptide. Glu-90 is a thiamine diphosphate binding site. Residues Ile-143, Ala-191, Val-192, Asp-194, and Asn-196 each coordinate K(+).

In terms of assembly, heterotetramer of two PDHA1 and two PDHB subunits. The heterotetramer interacts with DLAT, and is part of the multimeric pyruvate dehydrogenase complex that contains multiple copies of pyruvate dehydrogenase (E1), dihydrolipoamide acetyltransferase (DLAT, E2) and lipoamide dehydrogenase (DLD, E3). It depends on thiamine diphosphate as a cofactor.

It is found in the mitochondrion matrix. The catalysed reaction is N(6)-[(R)-lipoyl]-L-lysyl-[protein] + pyruvate + H(+) = N(6)-[(R)-S(8)-acetyldihydrolipoyl]-L-lysyl-[protein] + CO2. The pyruvate dehydrogenase complex catalyzes the overall conversion of pyruvate to acetyl-CoA and CO(2), and thereby links the glycolytic pathway to the tricarboxylic cycle. The protein is Pyruvate dehydrogenase E1 component subunit beta, mitochondrial of Ascaris suum (Pig roundworm).